Here is a 677-residue protein sequence, read N- to C-terminus: UvrABC system protein B (677 aa).

The Helicase ATP-binding domain occupies 25–412; the sequence is QGVNGGERYQ…GGEVAQQVIR (388 aa). Position 38-45 (38-45) interacts with ATP; the sequence is GATGTGKT. The Beta-hairpin motif lies at 91 to 114; sequence YYDYYQPEAYVPVSDTYIAKTASI. The Helicase C-terminal domain occupies 429 to 591; the sequence is QVDDLLGEIR…IVPTAAGKKA (163 aa). The UVR domain occupies 639 to 674; sequence PELIDQLEGKMKEAAKKLDFEDAANLRDRIKQLRQK.

This sequence belongs to the UvrB family. In terms of assembly, forms a heterotetramer with UvrA during the search for lesions. Interacts with UvrC in an incision complex.

It localises to the cytoplasm. Functionally, the UvrABC repair system catalyzes the recognition and processing of DNA lesions. A damage recognition complex composed of 2 UvrA and 2 UvrB subunits scans DNA for abnormalities. Upon binding of the UvrA(2)B(2) complex to a putative damaged site, the DNA wraps around one UvrB monomer. DNA wrap is dependent on ATP binding by UvrB and probably causes local melting of the DNA helix, facilitating insertion of UvrB beta-hairpin between the DNA strands. Then UvrB probes one DNA strand for the presence of a lesion. If a lesion is found the UvrA subunits dissociate and the UvrB-DNA preincision complex is formed. This complex is subsequently bound by UvrC and the second UvrB is released. If no lesion is found, the DNA wraps around the other UvrB subunit that will check the other stand for damage. The protein is UvrABC system protein B of Parasynechococcus marenigrum (strain WH8102).